Reading from the N-terminus, the 304-residue chain is Galactofuranosyltransferase GlfT1 (304 aa).

It belongs to the glycosyltransferase 2 family. As to quaternary structure, is probably part of an AG biosynthetic complex.

It localises to the cell membrane. Its subcellular location is the secreted. The protein resides in the cell wall. It catalyses the reaction alpha-L-rhamnosyl-(1-&gt;3)-N-acetyl-alpha-D-glucosaminyl-diphospho-trans,octa-cis-decaprenol + 2 UDP-alpha-D-galactofuranose = beta-D-galactofuranosyl-(1-&gt;5)-beta-D-galactofuranosyl-(1-&gt;4)-alpha-L-rhamnosyl-(1-&gt;3)-N-acetyl-alpha-D-glucosaminyl-diphospho-trans,octa-cis-decaprenol + 2 UDP + 2 H(+). It participates in cell wall biogenesis; cell wall polysaccharide biosynthesis. Its function is as follows. Involved in the biosynthesis of the arabinogalactan (AG) region of the mycolylarabinogalactan-peptidoglycan (mAGP) complex, an essential component of the mycobacterial cell wall. Catalyzes the transfer of the first two galactofuranosyl (Galf) units from UDP-galactofuranose (UDP-Galf) onto the rhamnosyl-GlcNAc-diphospho-decaprenol (Rha-GlcNAc-PP-C50) acceptor, yielding galactofuranosyl-galactofuranosyl-rhamnosyl-GlcNAc-diphospho-decaprenol (Galf-Galf-Rha-GlcNAc-PP-C50). Thus, GlfT1 is the initiator of galactan synthesis, while GlfT2 continues with the subsequent polymerization events. This chain is Galactofuranosyltransferase GlfT1, found in Mycobacterium tuberculosis (strain CDC 1551 / Oshkosh).